The primary structure comprises 713 residues: tRNA 5-methylaminomethyl-2-thiouridine biosynthesis bifunctional protein MnmC (713 aa).

The tract at residues 1–300 is tRNA (mnm(5)s(2)U34)-methyltransferase; that stretch reads MTAEPNKPCQ…MAAILSSATP (300 aa). Residues 306-713 are FAD-dependent cmnm(5)s(2)U34 oxidoreductase; that stretch reads IGGGLASAHL…LRKLLKGKAL (408 aa).

This sequence in the N-terminal section; belongs to the methyltransferase superfamily. tRNA (mnm(5)s(2)U34)-methyltransferase family. It in the C-terminal section; belongs to the DAO family. Requires FAD as cofactor.

It is found in the cytoplasm. The enzyme catalyses 5-aminomethyl-2-thiouridine(34) in tRNA + S-adenosyl-L-methionine = 5-methylaminomethyl-2-thiouridine(34) in tRNA + S-adenosyl-L-homocysteine + H(+). Functionally, catalyzes the last two steps in the biosynthesis of 5-methylaminomethyl-2-thiouridine (mnm(5)s(2)U) at the wobble position (U34) in tRNA. Catalyzes the FAD-dependent demodification of cmnm(5)s(2)U34 to nm(5)s(2)U34, followed by the transfer of a methyl group from S-adenosyl-L-methionine to nm(5)s(2)U34, to form mnm(5)s(2)U34. This is tRNA 5-methylaminomethyl-2-thiouridine biosynthesis bifunctional protein MnmC from Shewanella baltica (strain OS155 / ATCC BAA-1091).